Reading from the N-terminus, the 538-residue chain is MEIKEISVPQQGVVADYMNGKKEIQSCFDYMLTEDAFKQRVQDLREREFFRQDLVTHLLEYNTKLQAGEATIQNVKALGDENTYVVIAGQQAGLLTGPLYTIHKIISVLQLAKEKEESLGVKVVPVFWIAGEDHDMDEINHTFVTKNKKIKKTIFHDRNPKKASASESELSLEDCRKWIEEIFKTYPETNFTKDVLQFVDDSLRKSNTYVDFFGHLIMKMFVNSGLILVDSHHPELRKLEVPFFKQIVSKYKEVQEGLHNQQEVIKELGYKPIIETKSNAVHIFMEIDNERVLLEDNQGKFVGKDGTYSFSYEELIEEMERSPERFSNNVVTRPLMQEYVFPTLAFIGGPGELAYWSELQQVFHTIGFRMPPVVPRITITYIERDIATDLHDLQLQERDPFLNNVDKLRENWLSNQIEEPIDDRFVEAKKEIMNIHTSLQQFVKEIDPGLSAFAGKNEFKINEQIELLERMLKRNVEKKHEVELNKFRRIQFALRPLGAPQERVWNVCYYLNQFGLDFVDRVMEKPFSWNGKHHVIKL.

Residues 460-484 are a coiled coil; the sequence is KINEQIELLERMLKRNVEKKHEVEL.

Belongs to the BshC family.

Functionally, involved in bacillithiol (BSH) biosynthesis. May catalyze the last step of the pathway, the addition of cysteine to glucosamine malate (GlcN-Mal) to generate BSH. This Bacillus thuringiensis subsp. konkukian (strain 97-27) protein is Putative cysteine ligase BshC.